A 184-amino-acid polypeptide reads, in one-letter code: Photosystem I assembly protein Ycf4 (184 aa).

2 helical membrane passes run 19–39 (ISNL…FLVG) and 57–77 (IIFF…LFIS).

It belongs to the Ycf4 family.

It localises to the plastid thylakoid membrane. In terms of biological role, seems to be required for the assembly of the photosystem I complex. This Cuscuta exaltata (Tall dodder) protein is Photosystem I assembly protein Ycf4.